Here is a 387-residue protein sequence, read N- to C-terminus: ERBB-3 BINDING PROTEIN 1 (387 aa).

2 necessary for nucleolar localization regions span residues 1 to 49 (MSDD…IVDL) and 297 to 387 (LLQP…PMEG). Positions 47 to 55 (VDLCEKGDA) are RNA-binding. Residues 337–387 (LQPTKTTENEPEIKAWLALPTKTKKKGGGKKKKGKKGDKVEEASQAEPMEG) are disordered. The interaction with RNA stretch occupies residues 356–373 (PTKTKKKGGGKKKKGKKG). A compositionally biased stretch (basic residues) spans 358–372 (KTKKKGGGKKKKGKK). The Nuclear localization signal signature appears at 360-369 (KKKGGGKKKK).

It belongs to the peptidase M24 family. As to quaternary structure, component of a ribonucleoprotein complex. Expressed during tuberisation and in roots, nodes, internodes, petioles, leaves, stolons, tubers and sprouts.

The protein localises to the nucleus. Its function is as follows. Binds RNA. Associates with 28S, 18S and 5.8S mature rRNAs, several rRNA precursors and probably U3 small nucleolar RNA. May be involved in regulation of intermediate and late steps of rRNA processing. May be involved in ribosome assembly. Required for expression of cell cycle genes such as CYCD3-1, RNR2A and CDKB1-1. Promotes, in a dose- and auxin-dependent manner, organ growth by stimulating both cell proliferation and expansion, via the regulation of RBR1 levels. This chain is ERBB-3 BINDING PROTEIN 1, found in Solanum tuberosum (Potato).